Here is a 339-residue protein sequence, read N- to C-terminus: Alcohol dehydrogenase (339 aa).

Residues cysteine 38, histidine 61, cysteine 92, cysteine 95, cysteine 98, cysteine 106, and cysteine 148 each coordinate Zn(2+). NAD(+)-binding positions include 172-177, aspartate 195, lysine 200, 260-262, and arginine 331; these read GIGGLG and VGL.

Belongs to the zinc-containing alcohol dehydrogenase family. Requires Zn(2+) as cofactor.

It carries out the reaction a primary alcohol + NAD(+) = an aldehyde + NADH + H(+). It catalyses the reaction a secondary alcohol + NAD(+) = a ketone + NADH + H(+). With respect to regulation, the rate-limiting step is NADH release. Catabolite repression. Its function is as follows. Active with primary alcohols, including methanol. In Geobacillus stearothermophilus (Bacillus stearothermophilus), this protein is Alcohol dehydrogenase (adh).